The chain runs to 470 residues: Uronate isomerase (470 aa).

The protein belongs to the metallo-dependent hydrolases superfamily. Uronate isomerase family.

The enzyme catalyses D-glucuronate = D-fructuronate. The catalysed reaction is aldehydo-D-galacturonate = keto-D-tagaturonate. The protein operates within carbohydrate metabolism; pentose and glucuronate interconversion. The polypeptide is Uronate isomerase (Serratia proteamaculans (strain 568)).